A 496-amino-acid chain; its full sequence is E3 ubiquitin-protein ligase XIAP (496 aa).

3 BIR repeats span residues glutamate 26 to isoleucine 93, glutamate 163 to valine 230, and tyrosine 264 to leucine 329. 3 residues coordinate Zn(2+): cysteine 299, cysteine 302, and histidine 319. Lysine 321 is covalently cross-linked (Glycyl lysine isopeptide (Lys-Gly) (interchain with G-Cter in ubiquitin)). Cysteine 326 lines the Zn(2+) pocket. Lysine 327 is covalently cross-linked (Glycyl lysine isopeptide (Lys-Gly) (interchain with G-Cter in ubiquitin)). Cysteine 449 bears the S-nitrosocysteine mark. The RING-type zinc finger occupies cysteine 449–cysteine 484.

Belongs to the IAP family. Monomer, and homodimer. Interacts (via BIR3 domain) with DIABLO/SMAC; the interaction inhibits apoptotic suppressor activity. Interacts with HTRA2/PRSS25; the interaction inhibits apoptotic suppressor activity. Interacts with TAB1/MAP3K7IP1 and AIFM1. Interaction with DIABLO/SMAC hinders binding of TAB1/MAP3K7IP1 and AIFM1. Interacts with TCF25 and COMMD1. Interacts (via BIR3 domain) with SEPTIN4. Interacts with RIP1, RIP2, RIP3, RIP4, CCS and USP19. Interacts (via BIR 2 domain and BIR 3 domain) with HAX1 (via C-terminus) and this interaction blocks ubiquitination of XIAP/BIRC4. Interacts with the monomeric form of BIRC5/survivin. Interacts with TLE3 and TCF7L2/TCF4. Interacts (via BIR 3 and RING domains) with PDCL3. In terms of processing, S-Nitrosylation down-regulates its E3 ubiquitin-protein ligase activity. Post-translationally, autoubiquitinated. Ubiquitinated by TRIM32; leading to proteasomal degradation.

The protein localises to the cytoplasm. It localises to the nucleus. The catalysed reaction is S-ubiquitinyl-[E2 ubiquitin-conjugating enzyme]-L-cysteine + [acceptor protein]-L-lysine = [E2 ubiquitin-conjugating enzyme]-L-cysteine + N(6)-ubiquitinyl-[acceptor protein]-L-lysine.. Functionally, multi-functional protein which regulates not only caspases and apoptosis, but also modulates inflammatory signaling and immunity, copper homeostasis, mitogenic kinase signaling, cell proliferation, as well as cell invasion and metastasis. Acts as a direct caspase inhibitor. Directly bind to the active site pocket of CASP3 and CASP7 and obstructs substrate entry. Inactivates CASP9 by keeping it in a monomeric, inactive state. Acts as an E3 ubiquitin-protein ligase regulating NF-kappa-B signaling and the target proteins for its E3 ubiquitin-protein ligase activity include: RIPK1, RIPK2, MAP3K2/MEKK2, DIABLO/SMAC, AIFM1, CCS, PTEN and BIRC5/survivin. Acts as an important regulator of innate immunity by mediating 'Lys-63'-linked polyubiquitination of RIPK2 downstream of NOD1 and NOD2, thereby transforming RIPK2 into a scaffolding protein for downstream effectors, ultimately leading to activation of the NF-kappa-B and MAP kinases signaling. 'Lys-63'-linked polyubiquitination of RIPK2 also promotes recruitment of the LUBAC complex to RIPK2. Regulates the BMP signaling pathway and the SMAD and MAP3K7/TAK1 dependent pathways leading to NF-kappa-B and JNK activation. Ubiquitination of CCS leads to enhancement of its chaperone activity toward its physiologic target, SOD1, rather than proteasomal degradation. Ubiquitination of MAP3K2/MEKK2 and AIFM1 does not lead to proteasomal degradation. Plays a role in copper homeostasis by ubiquitinating COMMD1 and promoting its proteasomal degradation. Can also function as E3 ubiquitin-protein ligase of the NEDD8 conjugation pathway, targeting effector caspases for neddylation and inactivation. Ubiquitinates and therefore mediates the proteasomal degradation of BCL2 in response to apoptosis. Protects cells from spontaneous formation of the ripoptosome, a large multi-protein complex that has the capability to kill cancer cells in a caspase-dependent and caspase-independent manner. Suppresses ripoptosome formation by ubiquitinating RIPK1 and CASP8. Acts as a positive regulator of Wnt signaling and ubiquitinates TLE1, TLE2, TLE3, TLE4 and AES. Ubiquitination of TLE3 results in inhibition of its interaction with TCF7L2/TCF4 thereby allowing efficient recruitment and binding of the transcriptional coactivator beta-catenin to TCF7L2/TCF4 that is required to initiate a Wnt-specific transcriptional program. In Rattus norvegicus (Rat), this protein is E3 ubiquitin-protein ligase XIAP (Xiap).